The sequence spans 538 residues: Putative outer membrane porin BglH (538 aa).

The first 25 residues, Met-1–Ala-25, serve as a signal peptide directing secretion. The disordered stretch occupies residues Lys-52–Thr-82. Polar residues predominate over residues Ala-62–Gln-73.

Belongs to the porin LamB (TC 1.B.3) family.

It localises to the cell outer membrane. Its function is as follows. May be a sugar porin with a broad carbohydrate specificity. The protein is Putative outer membrane porin BglH (bglH) of Shigella sonnei (strain Ss046).